The following is a 265-amino-acid chain: Neutrophil elastase (265 aa).

The N-terminal stretch at 1-26 (MALGRLSSRTLAAMLLALFLGGPALA) is a signal peptide. The region spanning 29–247 (IVGGRPARPH…FADWINSIIR (219 aa)) is the Peptidase S1 domain. A disulfide bond links Cys54 and Cys70. Active-site charge relay system residues include His69 and Asp116. 2 N-linked (GlcNAc...) asparagine glycosylation sites follow: Asn123 and Asn172. Cystine bridges form between Cys150-Cys208, Cys180-Cys187, and Cys198-Cys223. Ser202 functions as the Charge relay system in the catalytic mechanism.

It belongs to the peptidase S1 family. Elastase subfamily. In terms of assembly, interacts with NOTCH2NL.

It carries out the reaction Hydrolysis of proteins, including elastin. Preferential cleavage: Val-|-Xaa &gt; Ala-|-Xaa.. Serine protease that modifies the functions of natural killer cells, monocytes and granulocytes. Inhibits C5a-dependent neutrophil enzyme release and chemotaxis. Promotes blood coagulation. Through the activation of the platelet fibrinogen receptor integrin alpha-IIb/beta-3, potentiates platelet aggregation induced by a threshold concentration of cathepsin G (CTSG). Cleaves and thus inactivates tissue factor pathway inhibitor (TFPI). Capable of killing E.coli; probably digests outer membrane protein A (ompA) in E.coli. The polypeptide is Neutrophil elastase (Elane) (Mus musculus (Mouse)).